Reading from the N-terminus, the 328-residue chain is DNA-directed RNA polymerase subunit alpha (328 aa).

Residues 1–234 are alpha N-terminal domain (alpha-NTD); that stretch reads MVREKVKVST…DLFIPFLQAE (234 aa). The tract at residues 268 to 328 is alpha C-terminal domain (alpha-CTD); the sequence is IALKSIFIDQ…KQIMSILEKK (61 aa).

It belongs to the RNA polymerase alpha chain family. As to quaternary structure, in plastids the minimal PEP RNA polymerase catalytic core is composed of four subunits: alpha, beta, beta', and beta''. When a (nuclear-encoded) sigma factor is associated with the core the holoenzyme is formed, which can initiate transcription.

The protein localises to the plastid. It is found in the chloroplast. The enzyme catalyses RNA(n) + a ribonucleoside 5'-triphosphate = RNA(n+1) + diphosphate. DNA-dependent RNA polymerase catalyzes the transcription of DNA into RNA using the four ribonucleoside triphosphates as substrates. The sequence is that of DNA-directed RNA polymerase subunit alpha from Citrus sinensis (Sweet orange).